A 249-amino-acid chain; its full sequence is Leucyl/phenylalanyl-tRNA--protein transferase (249 aa).

Residues 1-21 (MSRTLPHLLSSDPASPFPPAE) are disordered.

This sequence belongs to the L/F-transferase family.

The protein localises to the cytoplasm. It catalyses the reaction N-terminal L-lysyl-[protein] + L-leucyl-tRNA(Leu) = N-terminal L-leucyl-L-lysyl-[protein] + tRNA(Leu) + H(+). The enzyme catalyses N-terminal L-arginyl-[protein] + L-leucyl-tRNA(Leu) = N-terminal L-leucyl-L-arginyl-[protein] + tRNA(Leu) + H(+). The catalysed reaction is L-phenylalanyl-tRNA(Phe) + an N-terminal L-alpha-aminoacyl-[protein] = an N-terminal L-phenylalanyl-L-alpha-aminoacyl-[protein] + tRNA(Phe). Functionally, functions in the N-end rule pathway of protein degradation where it conjugates Leu, Phe and, less efficiently, Met from aminoacyl-tRNAs to the N-termini of proteins containing an N-terminal arginine or lysine. The sequence is that of Leucyl/phenylalanyl-tRNA--protein transferase from Xanthomonas campestris pv. campestris (strain 8004).